Reading from the N-terminus, the 452-residue chain is Putative tripartite motif-containing protein 49B (452 aa).

An RING-type zinc finger spans residues Cys15–Thr56. A B box-type zinc finger spans residues Ser88–Ile129. Residues Cys93, His96, Cys115, and His121 each coordinate Zn(2+). Positions Glu269–Phe452 constitute a B30.2/SPRY domain.

It belongs to the TRIM/RBCC family.

In Homo sapiens (Human), this protein is Putative tripartite motif-containing protein 49B (TRIM49B).